We begin with the raw amino-acid sequence, 154 residues long: 6,7-dimethyl-8-ribityllumazine synthase (154 aa).

Residues F22, 56 to 58 (AFE), and 80 to 82 (TVI) contribute to the 5-amino-6-(D-ribitylamino)uracil site. (2S)-2-hydroxy-3-oxobutyl phosphate is bound at residue 85–86 (AT). Residue H88 is the Proton donor of the active site. F113 provides a ligand contact to 5-amino-6-(D-ribitylamino)uracil. (2S)-2-hydroxy-3-oxobutyl phosphate is bound at residue R127.

The protein belongs to the DMRL synthase family. Forms an icosahedral capsid composed of 60 subunits, arranged as a dodecamer of pentamers.

It catalyses the reaction (2S)-2-hydroxy-3-oxobutyl phosphate + 5-amino-6-(D-ribitylamino)uracil = 6,7-dimethyl-8-(1-D-ribityl)lumazine + phosphate + 2 H2O + H(+). The protein operates within cofactor biosynthesis; riboflavin biosynthesis; riboflavin from 2-hydroxy-3-oxobutyl phosphate and 5-amino-6-(D-ribitylamino)uracil: step 1/2. Functionally, catalyzes the formation of 6,7-dimethyl-8-ribityllumazine by condensation of 5-amino-6-(D-ribitylamino)uracil with 3,4-dihydroxy-2-butanone 4-phosphate. This is the penultimate step in the biosynthesis of riboflavin. The protein is 6,7-dimethyl-8-ribityllumazine synthase of Bacillus amyloliquefaciens (Bacillus velezensis).